Here is a 316-residue protein sequence, read N- to C-terminus: L-lactate dehydrogenase (316 aa).

Residues Val-15, Asp-37, Lys-42, Tyr-68, and 82-83 (GL) contribute to the NAD(+) site. Substrate-binding positions include Gln-85, Arg-91, and 123–126 (NPVD). NAD(+) contacts are provided by residues 121–123 (ASN) and Thr-146. 151–154 (DTSR) lines the substrate pocket. Beta-D-fructose 1,6-bisphosphate contacts are provided by Arg-156 and His-171. The Proton acceptor role is filled by His-178. Tyr-222 is subject to Phosphotyrosine. Residue Thr-231 coordinates substrate.

It belongs to the LDH/MDH superfamily. LDH family. As to quaternary structure, homotetramer.

The protein localises to the cytoplasm. The enzyme catalyses (S)-lactate + NAD(+) = pyruvate + NADH + H(+). It functions in the pathway fermentation; pyruvate fermentation to lactate; (S)-lactate from pyruvate: step 1/1. With respect to regulation, allosterically activated by fructose 1,6-bisphosphate (FBP). In terms of biological role, catalyzes the conversion of lactate to pyruvate. In Borreliella burgdorferi (strain ATCC 35210 / DSM 4680 / CIP 102532 / B31) (Borrelia burgdorferi), this protein is L-lactate dehydrogenase.